The primary structure comprises 496 residues: E1B 55 kDa protein (496 aa).

A disordered region spans residues methionine 1 to glycine 74. Over residues glycine 45 to alanine 61 the composition is skewed to low complexity. Phosphoserine is present on residues serine 490 and serine 491. Residue threonine 495 is modified to Phosphothreonine.

It belongs to the adenoviridae E1B 55 kDa protein family. Interacts with host PML-4 and PML-5; this interaction promotes efficient subnuclear targeting of E1B-55K to PML nuclear bodies. Interacts with E4-ORF3 protein. Interacts with E4-ORF6 protein. Phosphorylation at the C-terminus affects the subcellular location.

The protein resides in the host nucleus. Its subcellular location is the host cytoplasm. Its function is as follows. Plays a major role to prevent cellular inhibition of viral genome replication. Assembles an SCF-like E3 ubiquitin ligase complex based on the cellular proteins ELOB, ELOC, CUL5 and RBX1, in cooperation with viral E4orf6. This viral RING-type ligase ubiquitinates cellular substrates and targets them to proteasomal degradation: TP53/p53, LIG4, MRE11-RAD50-NBS1 (MRN) complex, ITGA3, DAXX and BLM. E1B-55K probably acts as the substrate-specific adapter of the SCF-like E3 ubiquitin ligase complex. Degradation of host TP53/p53 activity is essential for preventing E1A-induced TP53 accumulation that would otherwise lead to cell apoptosis and growth arrest. E1B-55K also inactivates TP53 transcription-factor activity by binding its transactivation domain. E1B-55K also functions as a SUMO1 E3 ligase for TP53 which causes the latter to be sequestered in promyelocytic leukemia (PML) nuclear bodies thereby contributing to maximal inhibition of TP53 function. This is E1B 55 kDa protein from Homo sapiens (Human).